We begin with the raw amino-acid sequence, 1260 residues long: Myosin-1 (1260 aa).

In terms of domain architecture, Myosin motor spans 34-713; the sequence is VGVSDLTLLS…TLFALEHMRD (680 aa). ATP is bound at residue 127–134; that stretch reads GESGAGKT. Residue serine 355 is modified to Phosphoserine. The tract at residues 402 to 484 is actin-binding; it reads SIGILDIYGF…PGIFATLDDS (83 aa). IQ domains lie at 717–737 and 738–763; these read YNMA…RIDS and AIKI…YGHR. The TH1 domain occupies 769 to 959; the sequence is KERRAMSLLG…TISVRQGRPA (191 aa). Polar residues-rich tracts occupy residues 948 to 963 and 972 to 988; these read SSTI…NSRQ and TLLS…SKGY. Positions 948–1106 are disordered; sequence SSTISVRQGR…PPPPTKQNIP (159 aa). Residues 989-1013 are compositionally biased toward low complexity; it reads GQQQHAQPSYGQQQQQQQRYAPQSH. Positions 1030-1064 are enriched in polar residues; sequence QQNFAASAAQTAYHPQQASHARVPSTNNAHTQHNR. Positions 1065–1082 are enriched in low complexity; that stretch reads QPAQQAAQPVQQAAQPAA. Over residues 1092-1101 the composition is skewed to pro residues; the sequence is APPPPPPPPT. An SH3 domain is found at 1103-1165; that stretch reads QNIPKFQAAY…PTNYIVEYKE (63 aa).

It belongs to the TRAFAC class myosin-kinesin ATPase superfamily. Myosin family. Post-translationally, phosphorylation of the TEDS site (Ser-355) is required for the polarization of the actin cytoskeleton. Phosphorylation probably activates the myosin-I ATPase activity.

It localises to the cytoplasm. It is found in the cytoskeleton. The protein resides in the actin patch. Type-I myosin implicated in the organization of the actin cytoskeleton. Required for proper actin cytoskeleton polarization. At the cell cortex, assembles in patch-like structures together with proteins from the actin-polymerizing machinery and promotes actin assembly. Functions as actin nucleation-promoting factor (NPF) for the Arp2/3 complex. In Kluyveromyces lactis (strain ATCC 8585 / CBS 2359 / DSM 70799 / NBRC 1267 / NRRL Y-1140 / WM37) (Yeast), this protein is Myosin-1 (MYO1).